We begin with the raw amino-acid sequence, 354 residues long: Ferrochelatase (354 aa).

Positions 204 and 306 each coordinate Fe cation.

This sequence belongs to the ferrochelatase family.

The protein localises to the cytoplasm. It carries out the reaction heme b + 2 H(+) = protoporphyrin IX + Fe(2+). Its pathway is porphyrin-containing compound metabolism; protoheme biosynthesis; protoheme from protoporphyrin-IX: step 1/1. In terms of biological role, catalyzes the ferrous insertion into protoporphyrin IX. This Coxiella burnetii (strain RSA 493 / Nine Mile phase I) protein is Ferrochelatase.